The primary structure comprises 808 residues: Phenylalanine--tRNA ligase beta subunit (808 aa).

Residues arginine 40 to arginine 149 enclose the tRNA-binding domain. The region spanning histidine 407–valine 484 is the B5 domain. 4 residues coordinate Mg(2+): aspartate 462, aspartate 468, glutamate 471, and glutamate 472. The region spanning serine 716 to arginine 808 is the FDX-ACB domain.

The protein belongs to the phenylalanyl-tRNA synthetase beta subunit family. Type 1 subfamily. As to quaternary structure, tetramer of two alpha and two beta subunits. It depends on Mg(2+) as a cofactor.

The protein resides in the cytoplasm. The catalysed reaction is tRNA(Phe) + L-phenylalanine + ATP = L-phenylalanyl-tRNA(Phe) + AMP + diphosphate + H(+). In Leptospira interrogans serogroup Icterohaemorrhagiae serovar Lai (strain 56601), this protein is Phenylalanine--tRNA ligase beta subunit.